Here is a 97-residue protein sequence, read N- to C-terminus: MNYIYPVNQVDIIKASDFQSQEISSLEDVVSAKYSDIKMDTDIQVSQIMEMVSNPESLNPESLAKLQTTLSNYSIGVSLAGTLARKTVSAVETLLKS.

It to S.typhimurium PrgJ.

Necessary for the secretion of IPA invasins. The polypeptide is Protein MxiI (mxiI) (Shigella flexneri).